The following is a 587-amino-acid chain: Inorganic phosphate transporter PHO84 (587 aa).

Over 1–67 (MSSVNKDTIH…FGWQQVKTIS (67 aa)) the chain is Extracellular. Lysine 6 is covalently cross-linked (Glycyl lysine isopeptide (Lys-Gly) (interchain with G-Cter in ubiquitin)). The chain crosses the membrane as a helical span at residues 68–88 (IAGVGFLTDSYDIFAINLGIT). Residues 89–108 (MMSYVYWHGSMPGPSQTLLK) lie on the Cytoplasmic side of the membrane. A helical membrane pass occupies residues 109–129 (VSTSVGTVIGQFGFGTLADIV). At 130–133 (GRKR) the chain is on the extracellular side. Residues 134–154 (IYGMELIIMIVCTILQTTVAH) traverse the membrane as a helical segment. At 155–156 (SP) the chain is on the cytoplasmic side. A helical membrane pass occupies residues 157 to 177 (AINFVAVLTFYRIVMGIGIGG). At 178-201 (DYPLSSIITSEFATTKWRGAIMGA) the chain is on the extracellular side. A helical membrane pass occupies residues 202–222 (VFANQAWGQISGGIIALILVA). The Cytoplasmic portion of the chain corresponds to 223-250 (AYKGELEYANSGAECDARCQKACDQMWR). A helical membrane pass occupies residues 251–271 (ILIGLGTVLGLACLYFRLTIP). Residues 272–345 (ESPRYQLDVN…RHFGQWKYGK (74 aa)) lie on the Extracellular side of the membrane. Lysine 298 participates in a covalent cross-link: Glycyl lysine isopeptide (Lys-Gly) (interchain with G-Cter in ubiquitin). Threonine 302 is subject to Phosphothreonine. Phosphoserine is present on residues serine 303 and serine 316. The residue at position 317 (threonine 317) is a Phosphothreonine. The residue at position 321 (serine 321) is a Phosphoserine. The helical transmembrane segment at 346 to 366 (ILLGTAGSWFTLDVAFYGLSL) threads the bilayer. At 367-395 (NSAVILQTIGYAGSKNVYKKLYDTAVGNL) the chain is on the cytoplasmic side. A helical membrane pass occupies residues 396–416 (ILICAGSLPGYWVSVFTVDII). Topologically, residues 417 to 419 (GRK) are extracellular. Residues 420–440 (PIQLAGFIILTALFCVIGFAY) form a helical membrane-spanning segment. Residues 441–442 (HK) lie on the Cytoplasmic side of the membrane. Residues 443 to 463 (LGDHGLLALYVICQFFQNFGP) traverse the membrane as a helical segment. Residues 464–485 (NTTTFIVPGECFPTRYRSTAHG) are Extracellular-facing. The chain crosses the membrane as a helical span at residues 486 to 506 (ISAASGKVGAIIAQTALGTLI). Over 507–522 (DHNCARDGKPTNCWLP) the chain is Cytoplasmic. Residues 523–543 (HVMEIFALFMLLGIFTTLLIP) form a helical membrane-spanning segment. The Extracellular portion of the chain corresponds to 544–587 (ETKRKTLEEINELYHDEIDPATLNFRNKNNDIESSSPSQLQHEA). The segment at 568–587 (FRNKNNDIESSSPSQLQHEA) is disordered. A phosphoserine mark is found at serine 577, serine 579, and serine 581.

Belongs to the major facilitator superfamily. Phosphate:H(+) symporter (TC 2.A.1.9) family. In terms of assembly, may function as a monomer. Phosphorylated; phosphorylation increases after phosphate addition to the growth medium. In terms of processing, ubiquitinated in a phosphate-dependent manner; ubiquitination may influence the trafficking of PHO84 to the cell membrane and serve as a signal for endocytosis and internalization.

Its subcellular location is the cell membrane. It is found in the vacuole. It catalyses the reaction phosphate(in) + H(+)(in) = phosphate(out) + H(+)(out). The enzyme catalyses Mn(2+)(in) = Mn(2+)(out). The catalysed reaction is Zn(2+)(in) = Zn(2+)(out). It carries out the reaction Cu(2+)(in) = Cu(2+)(out). It catalyses the reaction Co(2+)(in) = Co(2+)(out). With respect to regulation, transport activity is inhibited in the presence of the protonophore carbonylcyanide m-chlorophenylhydrazone. Transport activity is inhibited by glycerol-3-phosphate. Transport activity is inhibited by phosphonoacetic acid. Signaling activity is stimulated by glycerol-3-phosphate which acts as a nontransported PHO84 agonist that can trigger PKA signaling. Signaling activity is stimulated by arsenate. Proton-coupled high-affinity transporter for external inorganic phosphate. Acts as a transceptor, a membrane protein that in addition to its transporter activity also possesses receptor-like signaling activity; mediates activation of the protein kinase A (PKA) pathway targets during growth induction, triggered by phosphate addition to cells growth-arrested due to previous phosphate starvation. Is not an essential protein, since constitutive, low affinity phosphate transporters exist in yeast. Can function as a low affinity metal transporter that transports manganese, zinc, cobalt and copper. Plays a role in manganese homeostasis predominantly under manganese surplus conditions. The protein is Inorganic phosphate transporter PHO84 (PHO84) of Saccharomyces cerevisiae (strain ATCC 204508 / S288c) (Baker's yeast).